A 155-amino-acid chain; its full sequence is Putative pre-16S rRNA nuclease (155 aa).

Belongs to the YqgF nuclease family.

It is found in the cytoplasm. Could be a nuclease involved in processing of the 5'-end of pre-16S rRNA. This Paramagnetospirillum magneticum (strain ATCC 700264 / AMB-1) (Magnetospirillum magneticum) protein is Putative pre-16S rRNA nuclease.